Consider the following 209-residue polypeptide: MASINKLALLSRTLSSAAAQATVKPPVQVFGLEGRYATALYSAASKLSQLDQVEKDLTALQATIRSDKKLREYVTSPIINKKVMATALKEASEKLRFAPATVNLLGLLADNGRLKKLDTVINAYKTIMAAHRGEVVCEVVTAKPLDASQSKQLEGALKSFLKGNESLKITSRVDPSIIGGLIVSIGDKYVDMSIATKVKLYTDVIQTAA.

It belongs to the ATPase delta chain family. F-type ATPases have 2 components, CF(1) - the catalytic core - and CF(0) - the membrane proton channel. CF(1) has five subunits: alpha(3), beta(3), gamma(1), delta(1), epsilon(1). CF(0) has three main subunits: a, b and c.

Its subcellular location is the mitochondrion. The protein resides in the mitochondrion inner membrane. Functionally, mitochondrial membrane ATP synthase (F(1)F(0) ATP synthase or Complex V) produces ATP from ADP in the presence of a proton gradient across the membrane which is generated by electron transport complexes of the respiratory chain. F-type ATPases consist of two structural domains, F(1) - containing the extramembraneous catalytic core and F(0) - containing the membrane proton channel, linked together by a central stalk and a peripheral stalk. During catalysis, ATP synthesis in the catalytic domain of F(1) is coupled via a rotary mechanism of the central stalk subunits to proton translocation. Part of the complex F(0) domain and the peripheric stalk, which acts as a stator to hold the catalytic alpha(3)beta(3) subcomplex and subunit a/ATP6 static relative to the rotary elements. The polypeptide is ATP synthase subunit O, mitochondrial (Drosophila melanogaster (Fruit fly)).